The sequence spans 440 residues: Asparagine--tRNA ligase (440 aa).

This sequence belongs to the class-II aminoacyl-tRNA synthetase family. As to quaternary structure, homodimer.

It localises to the cytoplasm. It catalyses the reaction tRNA(Asn) + L-asparagine + ATP = L-asparaginyl-tRNA(Asn) + AMP + diphosphate + H(+). This Roseiflexus castenholzii (strain DSM 13941 / HLO8) protein is Asparagine--tRNA ligase.